Reading from the N-terminus, the 125-residue chain is Large ribosomal subunit protein bL20 (125 aa).

The protein belongs to the bacterial ribosomal protein bL20 family.

In terms of biological role, binds directly to 23S ribosomal RNA and is necessary for the in vitro assembly process of the 50S ribosomal subunit. It is not involved in the protein synthesizing functions of that subunit. The chain is Large ribosomal subunit protein bL20 from Zymomonas mobilis subsp. mobilis (strain ATCC 31821 / ZM4 / CP4).